The primary structure comprises 224 residues: Ribonuclease 3 (224 aa).

Positions 5–127 (ANRLQRRLGY…IIGAIYLDSD (123 aa)) constitute an RNase III domain. Glu-40 is a Mg(2+) binding site. Asp-44 is a catalytic residue. Mg(2+) is bound by residues Asp-113 and Glu-116. Glu-116 is a catalytic residue. Residues 154–224 (DPKTRLQECL…AELALKQLES (71 aa)) form the DRBM domain.

Belongs to the ribonuclease III family. In terms of assembly, homodimer. Mg(2+) is required as a cofactor.

It localises to the cytoplasm. It catalyses the reaction Endonucleolytic cleavage to 5'-phosphomonoester.. Digests double-stranded RNA. Involved in the processing of primary rRNA transcript to yield the immediate precursors to the large and small rRNAs (23S and 16S). Processes some mRNAs, and tRNAs when they are encoded in the rRNA operon. Processes pre-crRNA and tracrRNA of type II CRISPR loci if present in the organism. The polypeptide is Ribonuclease 3 (Photobacterium profundum (strain SS9)).